Here is a 103-residue protein sequence, read N- to C-terminus: Histone H4 (103 aa).

The segment covering 1–14 (MTGRGKGGKGLGKG) has biased composition (gly residues). The disordered stretch occupies residues 1-20 (MTGRGKGGKGLGKGGAKRHR). N6-acetyl-N6-methyllysine; alternate occurs at positions 6 and 13. The DNA-binding element occupies 17–21 (KRHRK).

Belongs to the histone H4 family. The nucleosome is a histone octamer containing two molecules each of H2A, H2B, H3 and H4 assembled in one H3-H4 heterotetramer and two H2A-H2B heterodimers. The octamer wraps approximately 147 bp of DNA.

It is found in the nucleus. It localises to the chromosome. Functionally, core component of nucleosome. Nucleosomes wrap and compact DNA into chromatin, limiting DNA accessibility to the cellular machineries which require DNA as a template. Histones thereby play a central role in transcription regulation, DNA repair, DNA replication and chromosomal stability. DNA accessibility is regulated via a complex set of post-translational modifications of histones, also called histone code, and nucleosome remodeling. In Trichogramma cacaeciae (Moth egg parasite), this protein is Histone H4.